Here is a 333-residue protein sequence, read N- to C-terminus: Flotillin-like protein FloA (333 aa).

Residues 9 to 29 (IVLIVGGIIFLILFFHYVPFF) form a helical membrane-spanning segment.

The protein belongs to the flotillin-like FloA family. Homooligomerizes.

Its subcellular location is the cell membrane. The protein resides in the membrane raft. Its function is as follows. Found in functional membrane microdomains (FMM) that may be equivalent to eukaryotic membrane rafts. FMMs are highly dynamic and increase in number as cells age. Flotillins are thought to be important factors in membrane fluidity. The protein is Flotillin-like protein FloA of Bacteroides thetaiotaomicron (strain ATCC 29148 / DSM 2079 / JCM 5827 / CCUG 10774 / NCTC 10582 / VPI-5482 / E50).